Reading from the N-terminus, the 809-residue chain is Spindle pole body component alp14 (809 aa).

2 HEAT repeats span residues 127 to 164 and 167 to 204; these read DSAAPVIESIIPSLSARSPKVIASNVAAIASLVEQFGA and IPSKMIIPHISNLFGHADKNVRKEASRLTVNIYRWTGD. Disordered stretches follow at residues 233 to 274, 507 to 608, and 619 to 638; these read PPKQ…SDDQ, AKAP…SGAL, and ELDDPAPQPAKHSRVDRYEH. A compositionally biased stretch (polar residues) spans 239–253; the sequence is FLKSQQPTSEPNVET. Acidic residues predominate over residues 262–274; sequence ENEESEPEPSDDQ. Residues 509–518 are compositionally biased toward basic residues; the sequence is APTKKSKVKP. Composition is skewed to low complexity over residues 526-551 and 582-595; these read VVVPSNAKAVKKSVVPSSPVVPSPRK and SRGLSRGTSSSLQQ. Phosphoserine is present on residues S543 and S548. A compositionally biased stretch (polar residues) spans 597-608; that stretch reads VKASTPLNSGAL. The stretch at 637–697 forms a coiled coil; the sequence is EHPKVLEDND…NTLRSARKAS (61 aa). Phosphoserine is present on residues S697 and S720.

It belongs to the TOG/XMAP215 family. In terms of assembly, interacts with alp14.

Its subcellular location is the cytoplasm. The protein resides in the cytoskeleton. It is found in the microtubule organizing center. It localises to the spindle pole body. The protein localises to the chromosome. Its subcellular location is the centromere. The protein resides in the kinetochore. In terms of biological role, required for bipolar spindle formation and proper chromosome segregation. Has a role in connecting the kinetochores and the plus end of pole to chromosome microtubules. Also required for the activation of the spindle checkpoint pathway. This is Spindle pole body component alp14 (alp14) from Schizosaccharomyces pombe (strain 972 / ATCC 24843) (Fission yeast).